The primary structure comprises 506 residues: MPTLYTDIEIPQLKISLKQPLGLFINNEFCPSSDGKTIETVNPATGEPITSFQAANEKDVDKAVKAARAAFDNVWSKTSSEQRGIYLSNLLKLIEEEQDTLAALETLDAGKPFHSNAKQDLAQIIELTRYYAGAVDKFNMGETIPLTFNKFAYTLKVPFGVVAQIVPWNYPLAMACRKMQGALAAGNTVIIKPAENTSLSLLYFATLIKKAGFPPGVVNVIPGYGSVVGKALGTHMDIDKISFTGSTKVGGSVLEASGQSNLKDITLECGGKSPALVFEDADLDKAIEWVANGIFFNSGQICTANSRVYVQSSIYDKFVEKFKETAKKEWDVAGKFDPFDEKCIVGPVISSTQYDRIKSYIERGKKEEKLDMFQTSEFPIGGAKGYFIPPTIFTDVPETSKLLRDEIFGPVVVVSKFTNYDDALKLANDTCYGLASAVFTKDVKKAHMFARDIKAGTVWINQTNQEEAKVPFGGFKMSGIGRESGDTGVDNYLQIKSVHVDLSLDK.

The active-site Proton acceptor is glutamate 268. The active-site Nucleophile is cysteine 302.

This sequence belongs to the aldehyde dehydrogenase family.

Its subcellular location is the cytoplasm. It catalyses the reaction an aldehyde + NAD(+) + H2O = a carboxylate + NADH + 2 H(+). The enzyme catalyses 3-aminopropanal + NAD(+) + H2O = beta-alanine + NADH + 2 H(+). Cytoplasmic aldehyde dehydrogenase involved in ethanol oxidation. Involved in pantothenic acid production through the conversion of 3-aminopropanal to beta-alanine, an intermediate in pantothenic acid (vitamin B5) and coenzyme A (CoA) biosynthesis. This chain is Aldehyde dehydrogenase [NAD(P)+] 2 (ALD3), found in Saccharomyces cerevisiae (strain ATCC 204508 / S288c) (Baker's yeast).